Reading from the N-terminus, the 415-residue chain is MNEAEGLRQRRPLRPQVITEDSPAQEAKEGSAYSSKVFRVTFLTLAASLAVPLLGATVLLDCPIDPQPISLKEPPLLTGVLEPNNKLQKAERLWENQLVGPESIVNIGDVLFTGTADGKILKIEDGEVQTVARIGHGPCGTPEDEPTCGRPLGIRVGPNNTLFVADAYYGLYEVNPGTGETKMLVSTKTLIEGQKLSFLNDLTVTQDGRKIYFTDSSSKWQRRDFLFLVMEGTDDGRLLEYDTVTKEVKVLMVGLRFPNGVQLSPAEDFVLVLETAMARIRRYYVSGLMKGGADMFVENMPGLPDNIRLSSSGGYWVAMPVVRPNPGFSMLDFLSEKPWIKRMIFKLLSQETVTKLLPKRSLVVELSETGSYRRSFHDPTGLTVPYVSEAHEHNGYLYLGSFRSPFICRLNLQHV.

Residues 1–30 are disordered; sequence MNEAEGLRQRRPLRPQVITEDSPAQEAKEG. Over 1–39 the chain is Cytoplasmic; the sequence is MNEAEGLRQRRPLRPQVITEDSPAQEAKEGSAYSSKVFR. The helical transmembrane segment at 40–60 threads the bilayer; it reads VTFLTLAASLAVPLLGATVLL. Over 61 to 412 the chain is Extracellular; it reads DCPIDPQPIS…RSPFICRLNL (352 aa). Asn159 carries an N-linked (GlcNAc...) asparagine glycan.

This sequence belongs to the strictosidine synthase family.

Its subcellular location is the membrane. This Gallus gallus (Chicken) protein is Adipocyte plasma membrane-associated protein (APMAP).